Consider the following 216-residue polypeptide: Phosphoribosylaminoimidazole-succinocarboxamide synthase (216 aa).

This sequence belongs to the SAICAR synthetase family.

The enzyme catalyses 5-amino-1-(5-phospho-D-ribosyl)imidazole-4-carboxylate + L-aspartate + ATP = (2S)-2-[5-amino-1-(5-phospho-beta-D-ribosyl)imidazole-4-carboxamido]succinate + ADP + phosphate + 2 H(+). It functions in the pathway purine metabolism; IMP biosynthesis via de novo pathway; 5-amino-1-(5-phospho-D-ribosyl)imidazole-4-carboxamide from 5-amino-1-(5-phospho-D-ribosyl)imidazole-4-carboxylate: step 1/2. This chain is Phosphoribosylaminoimidazole-succinocarboxamide synthase (purC), found in Aquifex aeolicus (strain VF5).